A 330-amino-acid chain; its full sequence is D-xylose-binding periplasmic protein (330 aa).

A signal peptide spans 1 to 23 (MKIKNILLTLCTSLLLTNVAAHA).

Belongs to the bacterial solute-binding protein 2 family.

The protein localises to the periplasm. Functionally, involved in the high-affinity D-xylose membrane transport system. Binds with high affinity to xylose. This Escherichia coli (strain K12) protein is D-xylose-binding periplasmic protein (xylF).